Consider the following 529-residue polypeptide: Putative amidohydrolase YtcJ (529 aa).

It belongs to the metallo-dependent hydrolases superfamily.

The polypeptide is Putative amidohydrolase YtcJ (ytcJ) (Bacillus subtilis (strain 168)).